The primary structure comprises 103 residues: Large ribosomal subunit protein uL23 (103 aa).

This sequence belongs to the universal ribosomal protein uL23 family. As to quaternary structure, part of the 50S ribosomal subunit. Contacts protein L29, and trigger factor when it is bound to the ribosome.

One of the early assembly proteins it binds 23S rRNA. One of the proteins that surrounds the polypeptide exit tunnel on the outside of the ribosome. Forms the main docking site for trigger factor binding to the ribosome. The protein is Large ribosomal subunit protein uL23 of Chlorobium phaeovibrioides (strain DSM 265 / 1930) (Prosthecochloris vibrioformis (strain DSM 265)).